Here is a 378-residue protein sequence, read N- to C-terminus: Apolipoprotein A-IV (378 aa).

Positions 1-20 (MFLKAVVLTLSLVAITGARA) are cleaved as a signal peptide. Tandem repeats lie at residues 33-54 (DYFS…QSEL), 60-81 (SVTK…RNSW), 82-98 (EHSR…RQVG), 110-130 (PNCD…QAVG), 131-152 (PYAE…NQLT), 153-174 (SHAQ…SSLT), 175-196 (PFAD…GHLT), 197-218 (PYTD…RSLA), 219-240 (PYAQ…FQMK), 241-262 (KNAE…QRLA), 263-280 (PVAE…AGLH), 281-302 (KSLA…RNVG), and 303-324 (PYGE…QKLG). The segment at 33 to 324 (DYFSQLSNNA…QVEELRQKLG (292 aa)) is 13 X 22 AA approximate tandem repeats. The interval 354-378 (EKESQDTPVALPKQEQEQSAVPLES) is disordered.

This sequence belongs to the apolipoprotein A1/A4/E family. As to quaternary structure, homodimer.

The protein localises to the secreted. Functionally, may have a role in chylomicrons and VLDL secretion and catabolism. Required for efficient activation of lipoprotein lipase by ApoC-II; potent activator of LCAT. Apoa-IV is a major component of HDL and chylomicrons. The protein is Apolipoprotein A-IV of Canis lupus familiaris (Dog).